The chain runs to 167 residues: uncharacterized protein (167 aa).

This is an uncharacterized protein from Homo sapiens (Human).